Here is a 459-residue protein sequence, read N- to C-terminus: Transcription factor 7-like 2 (459 aa).

The span at 1-11 (MPQLNGGGGDD) shows a compositional bias: gly residues. Residues 1-53 (MPQLNGGGGDDLGANDELISFKDEGEQEEKNSENSSAERDLADVKSSLVNESE) are CTNNB1-binding. The interval 1 to 96 (MPQLNGGGGD…AKRQDGGLFK (96 aa)) is disordered. Over residues 19–43 (ISFKDEGEQEEKNSENSSAERDLAD) the composition is skewed to basic and acidic residues. Residue K22 forms a Glycyl lysine isopeptide (Lys-Gly) (interchain with G-Cter in SUMO2) linkage. Polar residues predominate over residues 47–56 (SLVNESETNQ). A compositionally biased stretch (basic and acidic residues) spans 63–91 (EAERRPPPRSESFRDKSRESLEEAAKRQD). Phosphothreonine; by NLK is present on residues T178 and T189. The interval 178 to 372 (TPLITYSNEH…RRWHALSREE (195 aa)) is mediates interaction with MAD2L2. Over residues 295-305 (TVKQESSQSDV) the composition is skewed to polar residues. 2 disordered regions span residues 295-327 (TVKQ…KPHI) and 397-418 (RDNY…TNEH). Residue K297 forms a Glycyl lysine isopeptide (Lys-Gly) (interchain with G-Cter in SUMO) linkage. Residues 312–323 (KHQDSKKEEEKK) show a composition bias toward basic and acidic residues. A DNA-binding region (HMG box) is located at residues 327 to 395 (IKKPLNAFML…LHMQLYPGWS (69 aa)). The Nuclear localization signal motif lies at 402–408 (KKKKRKR).

It belongs to the TCF/LEF family. Interacts with TGFB1I1. Interacts with SPIN1. Interacts with CTNNB1 (via the armadillo repeat); forms stable transcription complex. Interacts with EP300. Interacts with NLK. Interacts with CCDC85B (probably through the HMG box); prevents interaction with CTNNB1. Interacts with TNIK. Interacts with MAD2L2; prevents TCF7L2/TCF4 binding to promZIPK/DAPK3oters, negatively modulating its transcriptional activity. Interacts with ZIPK/DAPK3. Interacts with XIAP/BIRC4 and TLE3. Interacts with DDIT3/CHOP. The CTNNB1 and TCF7L2/TCF4 complex interacts with PML (isoform PML-4). Identified in a complex with CTNNB1 and FERMT2. Interacts with C11orf84/SPINDOC in a SPIN1-dependent manner. Interacts with DAZAP2; the interaction results in localization of DAZAP2 to the nucleus. In terms of processing, phosphorylated at Thr-178 and/or Thr-189 by NLK. Phosphorylation by NLK at these sites inhibits DNA-binding by TCF7L2/TCF4, thereby preventing transcriptional activation of target genes of the canonical Wnt/beta-catenin signaling pathway. Post-translationally, polysumoylated. Sumoylation is enhanced by PIAS family members and desumoylation is enhanced by SENP2. Sumoylation/desumoylation regulates TCF7L2/TCF4 transcription activity in the Wnt/beta-catenin signaling pathway without altering interaction with CTNNB1 nor binding to DNA. In terms of tissue distribution, detected in adult brain and liver, and at lower levels in intestine, with a clear increase from the distal colon to the duodenum. Detected at low levels in heart, lung, kidney, pituitary and testis.

It is found in the nucleus. It localises to the PML body. In terms of biological role, participates in the Wnt signaling pathway and modulates MYC expression by binding to its promoter in a sequence-specific manner. Acts as a repressor in the absence of CTNNB1, and as activator in its presence. Activates transcription from promoters with several copies of the Tcf motif CCTTTGATC in the presence of CTNNB1. TLE1, TLE2, TLE3 and TLE4 repress transactivation mediated by TCF7L2/TCF4 and CTNNB1. Expression of dominant-negative mutants results in cell-cycle arrest in G1. Necessary for the maintenance of the epithelial stem-cell compartment of the small intestine. The chain is Transcription factor 7-like 2 (Tcf7l2) from Mus musculus (Mouse).